The primary structure comprises 329 residues: 36 kDa antigen (329 aa).

A helical membrane pass occupies residues 11-31 (AILTGGGALLLGLIVLFYLAY).

It belongs to the membrane fusion protein (MFP) (TC 8.A.1) family.

It is found in the membrane. The protein is 36 kDa antigen of Helicobacter pylori (strain J99 / ATCC 700824) (Campylobacter pylori J99).